Here is a 303-residue protein sequence, read N- to C-terminus: tRNA pseudouridine synthase-like 1 (303 aa).

Residue Asp-66 is the Nucleophile of the active site. At Ser-84 the chain carries Phosphoserine. Tyr-130 contributes to the substrate binding site.

This sequence belongs to the tRNA pseudouridine synthase TruA family.

It carries out the reaction a uridine in tRNA = a pseudouridine in tRNA. This is tRNA pseudouridine synthase-like 1 (PUSL1) from Homo sapiens (Human).